The following is a 175-amino-acid chain: Bcl-2-related protein A1 (175 aa).

This sequence belongs to the Bcl-2 family. Interacts directly with BCL2L11/BIM, BAK1, BID, BMF and BBC3. Interacts directly with PMAIP1. Interacts with BOP. Interacts with ING4. Interacts with UBQLN4.

It localises to the cytoplasm. Retards apoptosis induced by IL-3 deprivation. May function in the response of hemopoietic cells to external signals and in maintaining endothelial survival during infection. Can inhibit apoptosis induced by serum starvation in the mammary epithelial cell line HC11. In Bos taurus (Bovine), this protein is Bcl-2-related protein A1 (BCL2A1).